The following is a 67-amino-acid chain: Large ribosomal subunit protein bL35 (67 aa).

It belongs to the bacterial ribosomal protein bL35 family.

In Picosynechococcus sp. (strain ATCC 27264 / PCC 7002 / PR-6) (Agmenellum quadruplicatum), this protein is Large ribosomal subunit protein bL35.